Reading from the N-terminus, the 363-residue chain is D(1) dopamine receptor (363 aa).

Topologically, residues 1–24 are extracellular; the sequence is MAVLDLNLTTVIDSGFMESDRSVR. The N-linked (GlcNAc...) asparagine glycan is linked to Asn7. The helical transmembrane segment at 25-45 threads the bilayer; that stretch reads VLTGCFLSVLILSTLLGNTLV. Residues 46–61 are Cytoplasmic-facing; sequence CAAVTKFRHLRSKVTN. Residues 62-81 traverse the membrane as a helical segment; sequence FFVISLAVSDLLVAVLVMPW. The Extracellular segment spans residues 82–98; the sequence is KAVTEVAGFWPFGAFCD. Cys97 and Cys187 form a disulfide bridge. Residues 99–120 form a helical membrane-spanning segment; sequence IWVAFDIMCSTASILNLCVISV. Residues 121–139 are Cytoplasmic-facing; that stretch reads DRYWAISSPFRYERKMTPR. A helical transmembrane segment spans residues 140 to 164; sequence VAFVMISGAWTLSVLISFIPVQLKW. The Extracellular portion of the chain corresponds to 165 to 194; the sequence is HKAQPIGFLEVNASRRDLPTDNCDSSLNRT. The helical transmembrane segment at 195 to 219 threads the bilayer; the sequence is YAISSSLISFYIPVAIMIVTYTQIY. The Cytoplasmic segment spans residues 220-271; that stretch reads RIAQKQIRRISALERAAESAQIRHDSMGSGSNMDLESSFKLSFKRETKVLKT. Residues 272–297 traverse the membrane as a helical segment; that stretch reads LSVIMGVFVCCWLPFFILNCMVPFCK. Over 298-310 the chain is Extracellular; sequence RTSNGLPCISPTT. The helical transmembrane segment at 311–330 threads the bilayer; the sequence is FDVFVWFGWANSSLNPIIYA. At 331-363 the chain is on the cytoplasmic side; it reads FNADFRRAFAILLGCQRLCPGSISMETPSLNKN. A lipid anchor (S-palmitoyl cysteine) is attached at Cys345.

This sequence belongs to the G-protein coupled receptor 1 family. Retina.

It is found in the cell membrane. The protein localises to the cell projection. The protein resides in the cilium membrane. Functionally, dopamine receptor whose activity is mediated by G proteins which activate adenylyl cyclase. Could be involved in growth hormone release. The protein is D(1) dopamine receptor of Carassius auratus (Goldfish).